The chain runs to 286 residues: 4-hydroxybenzoate octaprenyltransferase (286 aa).

7 consecutive transmembrane segments (helical) span residues 20-40, 43-63, 95-115, 142-162, 167-187, 210-230, and 234-254; these read IGTL…AGGM, LKVL…GCII, ILFA…NPLV, FLGV…TGEV, WWLF…YAMV, QIIG…GWAA, and LVYG…QKLI.

The protein belongs to the UbiA prenyltransferase family. Mg(2+) is required as a cofactor.

It localises to the cell inner membrane. The catalysed reaction is all-trans-octaprenyl diphosphate + 4-hydroxybenzoate = 4-hydroxy-3-(all-trans-octaprenyl)benzoate + diphosphate. Its pathway is cofactor biosynthesis; ubiquinone biosynthesis. In terms of biological role, catalyzes the prenylation of para-hydroxybenzoate (PHB) with an all-trans polyprenyl group. Mediates the second step in the final reaction sequence of ubiquinone-8 (UQ-8) biosynthesis, which is the condensation of the polyisoprenoid side chain with PHB, generating the first membrane-bound Q intermediate 3-octaprenyl-4-hydroxybenzoate. In Shewanella sediminis (strain HAW-EB3), this protein is 4-hydroxybenzoate octaprenyltransferase.